The chain runs to 327 residues: Complex I intermediate-associated protein 30, mitochondrial (327 aa).

Residues 1–24 (MALVHKLLRGTYFLRKFSKPTSAL) constitute a mitochondrion transit peptide. Residues 42-63 (PVASPGKASSQRKTEGDLQGDH) form a disordered region. Residues 53–63 (RKTEGDLQGDH) show a composition bias toward basic and acidic residues. S318 bears the Phosphoserine mark.

It belongs to the CIA30 family. As to quaternary structure, part of the mitochondrial complex I assembly/MCIA complex that comprises at least the core subunits TMEM126B, NDUFAF1, ECSIT and ACAD9 and complement subunits such as COA1 and TMEM186. Interacts with ECSIT. Interacts with ACAD9. At early stages of complex I assembly, it is found in intermediate subcomplexes that contain different subunits including NDUFB6, NDUFA6, NDUFA9, NDUFS3, NDUFS7, ND1, ND2 and ND3. Interacts with TMEM70 and TMEM242. As to expression, ubiquitous.

The protein localises to the mitochondrion. It is found in the mitochondrion matrix. Its function is as follows. As part of the MCIA complex, involved in the assembly of the mitochondrial complex I. In Homo sapiens (Human), this protein is Complex I intermediate-associated protein 30, mitochondrial.